Consider the following 232-residue polypeptide: MGPLALPAWLQPRYRKNAYLFIYYLIQFCGHSWIFTNMTVRFFSFGKDSMVDTFYAIGLVMRLCQSVSLLELLHIYVGIESNHLLPRFLQLTERIIILFVVITSQEEVQEKYVVCVLFVFWNLLDMVRYTYSMLSVIGISYAVLTWLSQTLWMPIYPLCVLAEAFAIYQSLPYFESFGTYSTKLPFDLSIYFPYVLKIYLMMLFIGMYFTYSHLYSERRDILGIFPIKKKKM.

Residues 1-19 are Cytoplasmic-facing; the sequence is MGPLALPAWLQPRYRKNAY. The helical transmembrane segment at 20–40 threads the bilayer; it reads LFIYYLIQFCGHSWIFTNMTV. At 41–56 the chain is on the lumenal side; that stretch reads RFFSFGKDSMVDTFYA. Residues 57–77 traverse the membrane as a helical segment; that stretch reads IGLVMRLCQSVSLLELLHIYV. Over 78–112 the chain is Cytoplasmic; sequence GIESNHLLPRFLQLTERIIILFVVITSQEEVQEKY. A helical transmembrane segment spans residues 113–133; that stretch reads VVCVLFVFWNLLDMVRYTYSM. Topologically, residues 134–135 are lumenal; that stretch reads LS. The chain crosses the membrane as a helical span at residues 136–156; it reads VIGISYAVLTWLSQTLWMPIY. Tyrosine 156 is a catalytic residue. A topological domain (cytoplasmic) is located at residue proline 157. A helical transmembrane segment spans residues 158-178; the sequence is LCVLAEAFAIYQSLPYFESFG. The active site involves glutamate 163. The Lumenal portion of the chain corresponds to 179-189; that stretch reads TYSTKLPFDLS. The helical transmembrane segment at 190–210 threads the bilayer; it reads IYFPYVLKIYLMMLFIGMYFT. Residues 211–232 are Cytoplasmic-facing; sequence YSHLYSERRDILGIFPIKKKKM.

It belongs to the very long-chain fatty acids dehydratase HACD family. May interact with enzymes of the ELO family (including ELOVL1); with those enzymes that mediate condensation, the first of the four steps of the reaction cycle responsible for fatty acids elongation, may be part of a larger fatty acids elongase complex. In terms of tissue distribution, highly expressed in leukocytes, and low expression in heart, spleen, kidney, and placenta.

The protein localises to the endoplasmic reticulum membrane. The enzyme catalyses a very-long-chain (3R)-3-hydroxyacyl-CoA = a very-long-chain (2E)-enoyl-CoA + H2O. The catalysed reaction is (3R)-hydroxyhexadecanoyl-CoA = (2E)-hexadecenoyl-CoA + H2O. It participates in lipid metabolism; fatty acid biosynthesis. Catalyzes the third of the four reactions of the long-chain fatty acids elongation cycle. This endoplasmic reticulum-bound enzymatic process, allows the addition of two carbons to the chain of long- and very long-chain fatty acids/VLCFAs per cycle. This enzyme catalyzes the dehydration of the 3-hydroxyacyl-CoA intermediate into trans-2,3-enoyl-CoA, within each cycle of fatty acid elongation. Thereby, it participates in the production of VLCFAs of different chain lengths that are involved in multiple biological processes as precursors of membrane lipids and lipid mediators. This chain is Very-long-chain (3R)-3-hydroxyacyl-CoA dehydratase 4, found in Homo sapiens (Human).